Consider the following 495-residue polypeptide: EF-hand calcium-binding domain-containing protein 14 (495 aa).

Disordered regions lie at residues 1–50 (MKKR…EEEE) and 381–404 (TNKP…FTSK). Position 17 is a phosphoserine (Ser-17). The segment covering 18 to 31 (RRKKPKKGPSSHRL) has biased composition (basic residues). Positions 37–50 (PDSDSESSSEEEEE) are enriched in acidic residues. EF-hand domains are found at residues 434 to 463 (SSTE…WTSL) and 464 to 495 (GSAM…ALGI). 5 residues coordinate Ca(2+): Asp-477, Asp-479, Asp-481, Arg-483, and Glu-488.

The sequence is that of EF-hand calcium-binding domain-containing protein 14 (EFCAB14) from Homo sapiens (Human).